The chain runs to 193 residues: Holliday junction branch migration complex subunit RuvA (193 aa).

A domain I region spans residues 1-64 (MIGRIAGVLL…EDAHLLYGFL (64 aa)). Residues 65–139 (TPQERSTFRE…GKLGADLGAM (75 aa)) are domain II. The flexible linker stretch occupies residues 139-143 (MAGAA). A domain III region spans residues 144 to 193 (SQSDHASDILNALLALGYSEKEGLAAIKNVPAGTGVSEGIKLALKALSKA).

The protein belongs to the RuvA family. As to quaternary structure, homotetramer. Forms an RuvA(8)-RuvB(12)-Holliday junction (HJ) complex. HJ DNA is sandwiched between 2 RuvA tetramers; dsDNA enters through RuvA and exits via RuvB. An RuvB hexamer assembles on each DNA strand where it exits the tetramer. Each RuvB hexamer is contacted by two RuvA subunits (via domain III) on 2 adjacent RuvB subunits; this complex drives branch migration. In the full resolvosome a probable DNA-RuvA(4)-RuvB(12)-RuvC(2) complex forms which resolves the HJ.

It is found in the cytoplasm. Functionally, the RuvA-RuvB-RuvC complex processes Holliday junction (HJ) DNA during genetic recombination and DNA repair, while the RuvA-RuvB complex plays an important role in the rescue of blocked DNA replication forks via replication fork reversal (RFR). RuvA specifically binds to HJ cruciform DNA, conferring on it an open structure. The RuvB hexamer acts as an ATP-dependent pump, pulling dsDNA into and through the RuvAB complex. HJ branch migration allows RuvC to scan DNA until it finds its consensus sequence, where it cleaves and resolves the cruciform DNA. The protein is Holliday junction branch migration complex subunit RuvA of Paraburkholderia phymatum (strain DSM 17167 / CIP 108236 / LMG 21445 / STM815) (Burkholderia phymatum).